The following is a 930-amino-acid chain: Serine/threonine-protein kinase ATG1 (930 aa).

The region spanning 23–326 (FIIDREIGKG…FENFFAHHVV (304 aa)) is the Protein kinase domain. Residues 29 to 37 (IGKGSFAQV) and lysine 52 each bind ATP. Residue aspartate 166 is the Proton acceptor of the active site. Disordered regions lie at residues 336-468 (DDIP…TEEE), 504-563 (GQNN…SASP), 853-874 (ISSG…DTEE), and 904-930 (NQAK…YGST). Residues 337–350 (DIPKPPKRELETIR) are compositionally biased toward basic and acidic residues. A compositionally biased stretch (low complexity) spans 377 to 393 (SPKSPRSSPRSSTVNSS). 2 stretches are compositionally biased toward polar residues: residues 400 to 417 (RQSQ…HNSG) and 504 to 531 (GQNN…TTGA). An ATG13-binding region spans residues 629–897 (AAQAIEEFAT…RLNMVRKKQQ (269 aa)).

The protein belongs to the protein kinase superfamily. Ser/Thr protein kinase family. APG1/unc-51/ULK1 subfamily. As to quaternary structure, homodimer. Dimerization requires the presence of ATG13. Forms a ternary complex with ATG13 and ATG17.

The protein resides in the cytoplasm. It localises to the preautophagosomal structure membrane. The catalysed reaction is L-seryl-[protein] + ATP = O-phospho-L-seryl-[protein] + ADP + H(+). It carries out the reaction L-threonyl-[protein] + ATP = O-phospho-L-threonyl-[protein] + ADP + H(+). Functionally, serine/threonine protein kinase involved in the cytoplasm to vacuole transport (Cvt) and found to be essential in autophagy, where it is required for the formation of autophagosomes. Involved in the clearance of protein aggregates which cannot be efficiently cleared by the proteasome. Required for selective autophagic degradation of the nucleus (nucleophagy) as well as for mitophagy which contributes to regulate mitochondrial quantity and quality by eliminating the mitochondria to a basal level to fulfill cellular energy requirements and preventing excess ROS production. Also involved in endoplasmic reticulum-specific autophagic process, in selective removal of ER-associated degradation (ERAD) substrates. Plays a key role in ATG9 and ATG23 cycling through the pre-autophagosomal structure and is necessary to promote ATG18 binding to ATG9 through phosphorylation of ATG9. Catalyzes phosphorylation of ATG4, decreasing the interaction between ATG4 and ATG8 and impairing deconjugation of PE-conjugated forms of ATG8. Contributes to conidiation by regulating the conidial levels of the conidiation-related protein CP15 and mediates fungal oxidation resistance by controlling total superoxide dismutase (SOD) activity. The polypeptide is Serine/threonine-protein kinase ATG1 (Beauveria bassiana (strain ARSEF 2860) (White muscardine disease fungus)).